The chain runs to 71 residues: Small ribosomal subunit protein bS21 (71 aa).

The span at 48–59 (EKASLAKRHAKR) shows a compositional bias: basic residues. Residues 48–71 (EKASLAKRHAKRNFRENARNTRLY) form a disordered region. Residues 60-71 (NFRENARNTRLY) are compositionally biased toward basic and acidic residues.

The protein belongs to the bacterial ribosomal protein bS21 family.

The protein is Small ribosomal subunit protein bS21 of Glaesserella parasuis serovar 5 (strain SH0165) (Haemophilus parasuis).